Reading from the N-terminus, the 1187-residue chain is DNA-directed RNA polymerase subunit beta (1187 aa).

Residues 1150-1187 are disordered; it reads KDEDDDPASSADDLGFNIGARPDAAAKEDQKAEEPEYQ. Residues 1173 to 1187 are compositionally biased toward basic and acidic residues; it reads AAAKEDQKAEEPEYQ.

The protein belongs to the RNA polymerase beta chain family. As to quaternary structure, the RNAP catalytic core consists of 2 alpha, 1 beta, 1 beta' and 1 omega subunit. When a sigma factor is associated with the core the holoenzyme is formed, which can initiate transcription.

The enzyme catalyses RNA(n) + a ribonucleoside 5'-triphosphate = RNA(n+1) + diphosphate. Its function is as follows. DNA-dependent RNA polymerase catalyzes the transcription of DNA into RNA using the four ribonucleoside triphosphates as substrates. This Bifidobacterium longum (strain NCC 2705) protein is DNA-directed RNA polymerase subunit beta.